The primary structure comprises 540 residues: FAD-binding monooxygenase lolF1 (540 aa).

FAD-binding positions include 43 to 46 and 55 to 58; these read VWRE and DSLF. Residues 53 to 55, 182 to 188, and 205 to 206 each bind NADP(+); these read AVD, TGPSGVQ, and QS.

Belongs to the FAD-binding monooxygenase family. The cofactor is FAD.

Its pathway is alkaloid biosynthesis. Functionally, FAD-binding monooxygenase; part of the gene cluster that mediates the biosynthesis of loline alkaloids, potent insecticidal agents composed of a pyrrolizidine ring system and an uncommon ether bridge linking carbons 2 and 7. Lolines are structurally differentiated by the various modifications of the L-amino group and include norloline, loline, N-methylloline, N-acetylloline, N-acetylnorloline, and N-formylloline. The first committed step is the condensation of O-acetyl-L-homoserine (derived from L-aspartic acid) and L-proline, probably catalyzed by the gamma-type pyridoxal 5'-phosphate(PLP)-dependent enzyme lolC, to give the diamino diacid, NACPP. Ensuing cyclization, decarboxylation, and acetylation steps yield 1-exo-acetamidopyrrolizidine (AcAP). LolO is required for installation of the ether bridge upon the pathway intermediate, 1-exo-acetamidopyrrolizidine (AcAP). In sequential 2-oxoglutarate- and O(2)-consuming steps, lolO removes hydrogens from C2 and C7 of AcAP to form both carbon-oxygen bonds in N-acetylnorloline (NANL), the precursor to all other lolines. The enzymes lolD, lolE, lolF and lolT have also been proposed to be involved in the ether-bridge installation. Further processing of the exocyclic moiety of NANL by fungal N-acetamidase (LolN), methyltransferase (LolM), and cytochrome P450 (LolP) enzymes, with occasional involvement of a plant acetyltransferase, generates the other known lolines. LolN transforms NANL to norlonine which is monomethylated and dimethylated to respectively lonine and N-methyllonine (NML) by lolM. LolP catalyzes hydroxylation of the methyl group in N-methylloline (NML) and further oxygenation to N-formylloline (NFL). A plant acetyltransferase is responsible for the acetylation of loline to form N-acetylloline (NAL). LolA might interact with aspartate kinase to prevent feedback inhibition of its activity by these end products and thereby promote production of L-homoserine from L-aspartate. The sequence is that of FAD-binding monooxygenase lolF1 from Epichloe uncinata (Endophyte fungus).